Reading from the N-terminus, the 759-residue chain is MAKTKGLPKDTAVTPSPHLRPHTADLNRLLAGEHHDPHSILGAHEYDDHTVIRAYRPHATEVAAVVGGERHVFTHLEAGVFAVTLPFTGLIDYRLEVGYDHGGDQPHIHHTADAYRFLPTLGEMDLHLFSEGRHERLWEVLGAHPRTFETPDGVVEGVSFAVWAPNANGVQLIGDFNHWDGNEAQLRVLGSTGVWELFWPDFPVDGLYKFRIHGADGVVSERADPMAFATEVPPQTASRVTTSSYTWNDDAWMTQRAAQNPVFEPMSTLEVHLMSWRPGLSYVELADQLTEYVVEHGFTHVEMLPVAEHPFGGSWGYQVTSYYAPTSRLGTPDEFRYLVDRLHQAGIGVIVDWVPAHFPKDAWALGRFDGTALYEHADPRRGEQLDWGTYVFDFGRAEVRNFLVANALYWLQEFHVDGLRVDAVASMLYLDYSRPEGGWTPNIYGGRENLEAVQFLQEMNATVHKASPGIVTIAEESTSWPGVTRPTNLGGLGFSMKWNMGWMNDTLAFISRDPIHRSYHHHEMTFSMLYAFSENYVLPISHDEVVHGKGTLWGRMPGDDHRKAAGVRQLLAYQWAHPGKQLLFQGQEFGQRAEWSEERGVDWYQLDENSYSGGILRMISDMNGIYTSHRALWSHDTSPEGYSWIDANDSTNNVLSFLRYGDDGSVLACVFNFSGSEHSHYRLGLPHAGTWREVLNTDAADYNGAGIGNYGAVQATDEPWHGRPASAVMVLPPLSALWFEPVAAEAPVVQEPPTAPPLS.

Positions 1–21 (MAKTKGLPKDTAVTPSPHLRP) are disordered. Asp422 functions as the Nucleophile in the catalytic mechanism. Glu475 acts as the Proton donor in catalysis.

The protein belongs to the glycosyl hydrolase 13 family. GlgB subfamily. Monomer.

The catalysed reaction is Transfers a segment of a (1-&gt;4)-alpha-D-glucan chain to a primary hydroxy group in a similar glucan chain.. It participates in glycan biosynthesis; glycogen biosynthesis. Functionally, catalyzes the formation of the alpha-1,6-glucosidic linkages in glycogen by scission of a 1,4-alpha-linked oligosaccharide from growing alpha-1,4-glucan chains and the subsequent attachment of the oligosaccharide to the alpha-1,6 position. The sequence is that of 1,4-alpha-glucan branching enzyme GlgB from Mycobacterium sp. (strain JLS).